The sequence spans 309 residues: Taste receptor type 2 member 46 (309 aa).

M1 is a topological domain (extracellular). The chain crosses the membrane as a helical span at residues 2-22 (ITFLPIIFSILIVVTFVIGNF). Topologically, residues 23 to 46 (ANGFIALANSIEWFKRQKISFADQ) are cytoplasmic. A helical membrane pass occupies residues 47-67 (ILTALAVSRVGLLWVLLLNWY). Residues 68–86 (ATELNPAFYSIEVRITAYN) are Extracellular-facing. Residues 87 to 107 (LWAVINHFSNWLATSLSIFYL) form a helical membrane-spanning segment. The Cytoplasmic portion of the chain corresponds to 108–126 (LKIANFSNLIFLRLKRRVK). The helical transmembrane segment at 127-147 (SVVLVILLGPLLFLVCHLFVI) threads the bilayer. The Extracellular segment spans residues 148-178 (NMNQIIWTKEYEGNMTWKIKLRSAMYLSNIT). N161 and N176 each carry an N-linked (GlcNAc...) asparagine glycan. Residues 179 to 199 (VTILANLVPFTLTLISFLLLI) traverse the membrane as a helical segment. Over 200–229 (CSLCKHLKKMQLHGKGSQDPSMKVHIKALQ) the chain is Cytoplasmic. The helical transmembrane segment at 230-250 (TVTSFLLLCAIYFLSIIMSVW) threads the bilayer. Over 251–259 (SFESLENKP) the chain is Extracellular. The chain crosses the membrane as a helical span at residues 260–280 (VFMFCEAITFSYPSTHPFILI). Residues 281–309 (WGNKKLKQTFLSVLWHVRYWVKGEEPSSP) lie on the Cytoplasmic side of the membrane.

This sequence belongs to the G-protein coupled receptor T2R family.

Its subcellular location is the membrane. The protein resides in the cell projection. The protein localises to the cilium membrane. Receptor that may play a role in the perception of bitterness and is gustducin-linked. May play a role in sensing the chemical composition of the gastrointestinal content. The activity of this receptor may stimulate alpha gustducin, mediate PLC-beta-2 activation and lead to the gating of TRPM5. In airway epithelial cells, binding of bitter compounds increases the intracellular calcium ion concentration and stimulates ciliary beat frequency. The chain is Taste receptor type 2 member 46 (TAS2R46) from Pan paniscus (Pygmy chimpanzee).